Consider the following 510-residue polypeptide: Thermostable carboxypeptidase 1 (510 aa).

The 504-residue stretch at 3–506 (PEAAYQNLLE…FLAYLEKKYA (504 aa)) folds into the Peptidase M32 domain. The short motif at 245 to 247 (HPF) is the HPF element. The DXRXT motif lies at 255–259 (DVRIT). Residue H276 coordinates Zn(2+). Residues 276 to 280 (HEMGH) carry the HEXXH motif. The active-site Proton donor/acceptor is the E277. Zn(2+) contacts are provided by H280 and E306. The short motif at 305 to 308 (HESQ) is the HES/GQ element. The I/NRXXA/SD motif lies at 357–362 (IRVEAD). Residues 412-419 (GVMQDVHW) carry the GXXQDXHW motif.

Belongs to the peptidase M32 family. In terms of assembly, homodimer. The cofactor is Zn(2+).

It catalyses the reaction Release of a C-terminal amino acid with broad specificity, except for -Pro.. Functionally, broad specificity carboxypetidase that releases amino acids sequentially from the C-terminus, including neutral, aromatic, polar and basic residues, but not Pro. Has lower activity with substrates ending with Gly or Glu. The chain is Thermostable carboxypeptidase 1 from Thermus thermophilus (strain ATCC 27634 / DSM 579 / HB8).